The chain runs to 605 residues: ATP-dependent RNA helicase DBP3 (605 aa).

Residues 1-124 (MSAEELVASP…TPALSKKQQK (124 aa)) form a disordered region. Positions 54–66 (KDKKDKKEKKDKK) are enriched in basic residues. Over residues 104-114 (PVSTATPTESE) the composition is skewed to polar residues. The Q motif motif lies at 175 to 201 (LSIRDLPINSKLQPFLNKFEKPTPIQA). The region spanning 204 to 391 (WPALLSKKDV…STFLNNPLRI (188 aa)) is the Helicase ATP-binding domain. 217 to 224 (AETGSGKT) contacts ATP. A DEAD box motif is present at residues 336–339 (DEAD). Positions 424–575 (HLKAHLKVHP…EIPKEMDRFP (152 aa)) constitute a Helicase C-terminal domain.

This sequence belongs to the DEAD box helicase family. DDX5/DBP2 subfamily.

The protein resides in the nucleus. It localises to the nucleolus. It catalyses the reaction ATP + H2O = ADP + phosphate + H(+). Functionally, ATP-dependent RNA helicase required for 60S ribosomal subunit synthesis. Involved in efficient pre-rRNA processing, predominantly at site A3, which is necessary for the normal formation of 25S and 5.8S rRNAs. The protein is ATP-dependent RNA helicase DBP3 (DBP3) of Cryptococcus neoformans var. neoformans serotype D (strain JEC21 / ATCC MYA-565) (Filobasidiella neoformans).